A 125-amino-acid polypeptide reads, in one-letter code: Fluoride-specific ion channel FluC (125 aa).

The next 4 helical transmembrane spans lie at 6–26 (AWIA…SGLV), 36–56 (WGTW…WALA), 68–88 (FIVL…AFEA), and 97–117 (WLLA…CVFL). Na(+) is bound by residues G76 and T79.

Belongs to the fluoride channel Fluc/FEX (TC 1.A.43) family.

The protein localises to the cell inner membrane. It catalyses the reaction fluoride(in) = fluoride(out). Its activity is regulated as follows. Na(+) is not transported, but it plays an essential structural role and its presence is essential for fluoride channel function. Its function is as follows. Fluoride-specific ion channel. Important for reducing fluoride concentration in the cell, thus reducing its toxicity. This is Fluoride-specific ion channel FluC from Nitrosococcus oceani (strain ATCC 19707 / BCRC 17464 / JCM 30415 / NCIMB 11848 / C-107).